The primary structure comprises 51 residues: Large ribosomal subunit protein bL33 (51 aa).

Belongs to the bacterial ribosomal protein bL33 family.

This is Large ribosomal subunit protein bL33 from Francisella tularensis subsp. tularensis (strain FSC 198).